A 282-amino-acid polypeptide reads, in one-letter code: Glutamyl endopeptidase (282 aa).

A signal peptide spans 1-27; the sequence is MKKRFLSICTMTIAALATTTMVNTSYA. Positions 28-66 are excised as a propeptide; it reads KTDTESHNHSSLGTENKNVLDINSSSHNIKPSQNKSYPS. Active-site charge relay system residues include His117, Asp159, and Ser235.

The protein belongs to the peptidase S1B family.

The protein resides in the secreted. It carries out the reaction Preferential cleavage: Glu-|-Xaa, Asp-|-Xaa.. Exhibits a significant hydrolytic activity for the carbonyl side of glutamic acid. Shows activity toward human fibronectin and type 1 collagen. This is Glutamyl endopeptidase (gseA) from Staphylococcus epidermidis (strain ATCC 35984 / DSM 28319 / BCRC 17069 / CCUG 31568 / BM 3577 / RP62A).